A 249-amino-acid polypeptide reads, in one-letter code: Phosphate import ATP-binding protein PstB (249 aa).

Residues 3–244 enclose the ABC transporter domain; the sequence is IEANDVHVYY…PKKKRTQNYI (242 aa). 35-42 is a binding site for ATP; sequence GPSGCGKS.

Belongs to the ABC transporter superfamily. Phosphate importer (TC 3.A.1.7) family. The complex is composed of two ATP-binding proteins (PstB), two transmembrane proteins (PstC and PstA) and a solute-binding protein (PstS).

The protein resides in the cell inner membrane. The catalysed reaction is phosphate(out) + ATP + H2O = ADP + 2 phosphate(in) + H(+). In terms of biological role, part of the ABC transporter complex PstSACB involved in phosphate import. Responsible for energy coupling to the transport system. The protein is Phosphate import ATP-binding protein PstB of Cytophaga hutchinsonii (strain ATCC 33406 / DSM 1761 / CIP 103989 / NBRC 15051 / NCIMB 9469 / D465).